A 400-amino-acid chain; its full sequence is E3 ubiquitin-protein ligase RNF149 (400 aa).

An N-terminal signal peptide occupies residues 1–32 (MAWRRREASVGARGVLALALLALALCVPGARG). N-linked (GlcNAc...) asparagine glycosylation is found at N52 and N145. The region spanning 67–175 (SSPKEGAHGL…PKGREILELV (109 aa)) is the PA domain. A helical membrane pass occupies residues 201–221 (VVFVAIAFITMMIISLAWLIF). The RING-type; atypical zinc finger occupies 269–310 (CAVCIENFKVKDIIRILPCKHIFHRICIDPWLLDHRTCPMCK). The segment at 325–400 (DVQEMPAPES…SDSRHGGPIS (76 aa)) is disordered. At S345 the chain carries Phosphoserine. Low complexity predominate over residues 356 to 368 (DSSPPSASPAESE). Residues 389–400 (GRSDSRHGGPIS) are compositionally biased toward basic and acidic residues.

Its subcellular location is the membrane. It carries out the reaction S-ubiquitinyl-[E2 ubiquitin-conjugating enzyme]-L-cysteine + [acceptor protein]-L-lysine = [E2 ubiquitin-conjugating enzyme]-L-cysteine + N(6)-ubiquitinyl-[acceptor protein]-L-lysine.. The protein operates within protein modification; protein ubiquitination. Its function is as follows. E3 ubiquitin-protein ligase. Ubiquitinates BRAF, inducing its proteasomal degradation. The chain is E3 ubiquitin-protein ligase RNF149 (RNF149) from Homo sapiens (Human).